A 598-amino-acid chain; its full sequence is Membrane protein insertase YidC (598 aa).

Residues 7–27 traverse the membrane as a helical segment; sequence NYFIAIALSVLIVLGWQFLYM. Residues 37-76 form a disordered region; sequence AQEAQKAQQQTEQVQQPAAGGQTPAQTSGAAPSGQAAATA. A compositionally biased stretch (low complexity) spans 40–76; sequence AQKAQQQTEQVQQPAAGGQTPAQTSGAAPSGQAAATA. 4 consecutive transmembrane segments (helical) span residues 377–397, 447–467, 492–512, and 538–558; these read FGVAILCTTIVVKALFFPLAS, WPVALQIPIFFSLYKVIYITI, LFGLLPFEGPTLLHLGVWPLI, and WMPLVFMFMLASFPAGLVIYW.

The protein belongs to the OXA1/ALB3/YidC family. Type 1 subfamily. In terms of assembly, interacts with the Sec translocase complex via SecD. Specifically interacts with transmembrane segments of nascent integral membrane proteins during membrane integration.

The protein resides in the cell inner membrane. Functionally, required for the insertion and/or proper folding and/or complex formation of integral membrane proteins into the membrane. Involved in integration of membrane proteins that insert both dependently and independently of the Sec translocase complex, as well as at least some lipoproteins. Aids folding of multispanning membrane proteins. This is Membrane protein insertase YidC from Rhizobium johnstonii (strain DSM 114642 / LMG 32736 / 3841) (Rhizobium leguminosarum bv. viciae).